The chain runs to 303 residues: MKIAILSRNPSLYSTSRLKEAGEKRGHEVHVIDTLRCYMNMATHKPTIHYQGQVLEGFDAIIPRIGASITFYGTAVLRQFEMMGVFPLNESVAISRARDKLRSLQLLSRKGVGMPVTGFAHSPDDIRDLISMVGGAPLVIKLLEGTQGIGVVLAETRKAAESVIEAFMGLKANILVQEFIKEAGGADIRCFVVGDKVVAAMKRQAQPGEFRSNLHRGGQASVIKITPEERSTAVRAARVMGLNVAGVDLLRSNHGPLVMEVNSSPGLEGIETATGKDIAGLIYSFIEKKSQEKKPSTRTKGQG.

Residues 104-287 (LQLLSRKGVG…IAGLIYSFIE (184 aa)) form the ATP-grasp domain. Residues K141, 178 to 179 (EF), D187, and 211 to 213 (RSN) each bind ATP. 3 residues coordinate Mg(2+): D248, E260, and N262. Residues D248, E260, and N262 each contribute to the Mn(2+) site.

The protein belongs to the RimK family. Mg(2+) serves as cofactor. Requires Mn(2+) as cofactor.

The polypeptide is Probable alpha-L-glutamate ligase 1 (Hahella chejuensis (strain KCTC 2396)).